The primary structure comprises 523 residues: Cytidine and dCMP deaminase domain-containing protein 1 (523 aa).

Over residues methionine 1 to glutamate 11 the composition is skewed to polar residues. Disordered regions lie at residues methionine 1 to threonine 27 and glutamine 55 to threonine 81. One can recognise a CMP/dCMP-type deaminase 1 domain in the interval glycine 71–glutamate 169. Residues histidine 110, cysteine 135, and cysteine 138 each coordinate Zn(2+). The short motif at asparagine 272 to leucine 284 is the Nuclear export signal element. The CMP/dCMP-type deaminase 2 domain occupies glutamate 318 to aspartate 483. Histidine 399 provides a ligand contact to Zn(2+). The Proton donor role is filled by glutamate 401. Residues cysteine 427 and cysteine 430 each coordinate Zn(2+). Positions glutamate 478 to glutamine 523 are disordered. Residues glutamate 486–serine 516 are compositionally biased toward basic and acidic residues. Residues arginine 489–arginine 511 carry the Bipartite nuclear localization signal motif.

This sequence belongs to the cytidine and deoxycytidylate deaminase family. The cofactor is Zn(2+).

It localises to the cytoplasm. Its subcellular location is the nucleus. It carries out the reaction 2'-deoxycytidine + H2O + H(+) = 2'-deoxyuridine + NH4(+). The catalysed reaction is cytidine + H2O + H(+) = uridine + NH4(+). Its function is as follows. Catalyzes the deamination of cytidine and deoxycytidine into uridine and deoxyuridine, respectively. May play an important role in testicular development and spermatogenesis. The protein is Cytidine and dCMP deaminase domain-containing protein 1 (Cdadc1) of Mus musculus (Mouse).